Consider the following 170-residue polypeptide: MASEAEKTFHRFAAFGESSSSGTEMNNKNFSKLCKDCGIMDGKTVTSTDVDIVFSKVKAKNARTITFQQFKEAVKELGQKRFKGKSPDEVLENIYGLMEGKDPATTGATKATTVGAVDRLTDTSKYTGTHKERFDESGKGKGIAGREEMTDNTGYVSGYKGSGTYDKKTK.

The disordered stretch occupies residues 127–170 (TGTHKERFDESGKGKGIAGREEMTDNTGYVSGYKGSGTYDKKTK). Basic and acidic residues predominate over residues 129–149 (THKERFDESGKGKGIAGREEM).

It belongs to the TPPP family. Expressed in spermatids. Detected in liver cancer (at protein level).

It is found in the cytoplasm. It localises to the cytosol. The protein resides in the cell projection. The protein localises to the cilium. Its subcellular location is the flagellum. Probable regulator of microtubule dynamics required for sperm motility. In contrast to other members of the family, has no microtubule bundling activity. This chain is Tubulin polymerization-promoting protein family member 2, found in Homo sapiens (Human).